The sequence spans 798 residues: Peregrinol diphosphate synthase TPS1, chloroplastic (798 aa).

Residues 1–25 (MASLSTPNINNTTFVNSKTQLPAVK) constitute a chloroplast transit peptide. Lys243 serves as a coordination point for substrate. Residues Asp377 and Asp379 each contribute to the Mg(2+) site. A DXDD motif motif is present at residues 377-380 (DLDD). Substrate is bound at residue Lys463.

Belongs to the terpene synthase family. Requires Mg(2+) as cofactor. Mostly expressed in trichomes of leaves and fruits.

It localises to the plastid. It is found in the chloroplast. The enzyme catalyses peregrinol diphosphate = (2E,6E,10E)-geranylgeranyl diphosphate + H2O. The protein operates within secondary metabolite biosynthesis; terpenoid biosynthesis. Involved in the biosynthesis of labdane-type diterpenoid including cleroda-dienols, and peregrinol lactones and furan derivatives, dopaminergic diterpenoids that can bind to dopamine receptors in the human pituitary gland, have probably ability to lower prolactin levels, and are used to treat menstrual cycle disorders (e.g. premenstrual syndrome and mastodynia). Terpene synthase that produces peregrinol diphosphate from geranylgeranyl diphosphate (GGPP). This is Peregrinol diphosphate synthase TPS1, chloroplastic from Vitex agnus-castus (Chaste tree).